Consider the following 181-residue polypeptide: Disulfide bond formation protein B (181 aa).

Topologically, residues 1–13 (MLSVGQWPNKPFA) are cytoplasmic. A helical transmembrane segment spans residues 14-30 (WLLLFLGCSGLLGAALY). Residues 31–48 (FQMVLNLEPCVKCVYQRM) are Periplasmic-facing. Cys-40 and Cys-43 are disulfide-bonded. The helical transmembrane segment at 49 to 64 (AVIGIGLSAIVGLFGS) threads the bilayer. Residues 65–71 (GLWLTRW) lie on the Cytoplasmic side of the membrane. A helical transmembrane segment spans residues 72 to 89 (AALIGWLYSSYQGLLIAY). Residues 90–145 (DHWDLQTSKNAFFAVCESAPNFPDWAPMHEWMPGLFAAPGLCGDIDWQWLGLGMPG) lie on the Periplasmic side of the membrane. A disulfide bridge connects residues Cys-105 and Cys-131. Residues 146–164 (WMTVIFAGLLLIGIIVTIC) form a helical membrane-spanning segment. Topologically, residues 165–181 (HIISSFTKKDGLVLYHK) are cytoplasmic.

Belongs to the DsbB family.

The protein localises to the cell inner membrane. Its function is as follows. Required for disulfide bond formation in some periplasmic proteins. Acts by oxidizing the DsbA protein. The sequence is that of Disulfide bond formation protein B from Idiomarina loihiensis (strain ATCC BAA-735 / DSM 15497 / L2-TR).